A 195-amino-acid chain; its full sequence is Interferon tau-5 (195 aa).

A signal peptide spans Met-1 to Gly-23. Intrachain disulfides connect Cys-24-Cys-122 and Cys-52-Cys-162.

Belongs to the alpha/beta interferon family. IFN-alphaII subfamily. Constitutively and exclusively expressed in the mononuclear cells of the extraembryonic trophectoderm.

The protein resides in the secreted. In terms of biological role, paracrine hormone primarily responsible for maternal recognition of pregnancy. Interacts with endometrial receptors, probably type I interferon receptors, and blocks estrogen receptor expression, preventing the estrogen-induced increase in oxytocin receptor expression in the endometrium. This results in the suppression of the pulsatile endometrial release of the luteolytic hormone prostaglandin F2-alpha, hindering the regression of the corpus luteum (luteolysis) and therefore a return to ovarian cyclicity. This, and a possible direct effect of IFN-tau on prostaglandin synthesis, leads in turn to continued ovarian progesterone secretion, which stimulates the secretion by the endometrium of the nutrients required for the growth of the conceptus. In summary, displays particularly high antiviral and antiproliferative potency concurrently with particular weak cytotoxicity, high antiluteolytic activity and immunomodulatory properties. In contrast with other IFNs, IFN-tau is not virally inducible. In Ovis aries (Sheep), this protein is Interferon tau-5 (IFNT5).